The following is a 1034-amino-acid chain: AP-3 complex subunit delta (1034 aa).

10 HEAT repeats span residues 35 to 72 (KYISTCIEEIKQELRQDNISVKCNAVAKLTYIQMLGYD), 143 to 180 (DLSRDLANDIMTLMSSTKPYLRMKAVLMMYKVFLRYPE), 181 to 217 (ALRPAFPKLKEKLEDPDPGVQSAAVNVICELARKNPK), 219 to 255 (YLPLAPIFFKLMTTSTNNWMLIKIIKLFGALTPLEPR), 258 to 297 (KKLIEPLTNLIHSTSAMSLLYECINTVIAVLISISSGMPN), 299 to 337 (SASIQLCVQKLRILIEDSDQNLKYLGLLAMSKILKTHPK), 338 to 374 (SVQAHKDLILACLDDKDESIRLRALDLLYGMVSKKNL), 376 to 414 (EIVKRLLGHMERAEGSAYRDELLYKVIEICAQSSYLYVT), 415 to 452 (NFEWYLTVLVELIQLEAGSRHGRLIAEQLLDVAIRVPV), and 570 to 609 (NSACMLIEMLRNQLSTSTDAMAMDTTTEGGIPPLAIEIVQ). Disordered stretches follow at residues 637–660 (DLDEWINAPPPEDAASSSSSEHDK), 669–688 (QAGTGADGGEKRRQSLELTP), 701–723 (EQSNNPHYLKSTPTASGASNADQ), and 758–1034 (QEQQ…KEIL). Residue S683 is modified to Phosphoserine. Position 687 is a phosphothreonine (T687). The segment covering 769–784 (GKKKHKKGKKSKKAKN) has biased composition (basic residues). 2 stretches are compositionally biased toward basic and acidic residues: residues 822–836 (KDGKYDPNDPHRALD) and 882–906 (KDKDKDKERKVKREHRESKRERKEA). Residues 928–942 (SATSNNNNTSTVLPD) show a composition bias toward low complexity. The segment covering 986–1003 (KVHKKKHKKEKSQRKEKK) has biased composition (basic residues). The segment covering 1007–1016 (ESASVSAIVS) has biased composition (low complexity). Residues 1025-1034 (GISTPSKEIL) are compositionally biased toward polar residues.

This sequence belongs to the adaptor complexes large subunit family. As to quaternary structure, adaptor protein complex 3 (AP-3) is a heterotetramer composed of two large chains (delta and beta3), a medium chain (mu3) and a small chain (sigma3).

It localises to the cytoplasmic vesicle. The protein localises to the clathrin-coated vesicle membrane. It is found in the golgi apparatus. In terms of biological role, part of the AP-3 complex, an adapter-related complex which is not clathrin-associated. The complex is associated with the Golgi region as well as more peripheral structures. It facilitates the budding of vesicles from the Golgi membrane and may be directly involved in trafficking to lysosomes. Functionally, may be a coat protein involved in the formation of specialized structures like pigment granules. In Drosophila melanogaster (Fruit fly), this protein is AP-3 complex subunit delta (g).